The sequence spans 547 residues: Chaperonin GroEL 1 (547 aa).

ATP is bound by residues 30-33 (TLGP), lysine 51, 87-91 (DGTTT), glycine 415, 479-481 (NAA), and aspartate 495. A disordered region spans residues 525–547 (PKKKGAPAGGGMGGMGGMDEMDY). Positions 531 to 541 (PAGGGMGGMGG) are enriched in gly residues.

The protein belongs to the chaperonin (HSP60) family. As to quaternary structure, forms a cylinder of 14 subunits composed of two heptameric rings stacked back-to-back. Interacts with the co-chaperonin GroES.

It localises to the cytoplasm. It carries out the reaction ATP + H2O + a folded polypeptide = ADP + phosphate + an unfolded polypeptide.. Its function is as follows. Together with its co-chaperonin GroES, plays an essential role in assisting protein folding. The GroEL-GroES system forms a nano-cage that allows encapsulation of the non-native substrate proteins and provides a physical environment optimized to promote and accelerate protein folding. This Anaeromyxobacter sp. (strain Fw109-5) protein is Chaperonin GroEL 1.